The following is a 1794-amino-acid chain: Protein TIC 214 (1794 aa).

A run of 6 helical transmembrane segments spans residues 19 to 39 (IINSVVVVGLYYGFLTTFSIG), 68 to 88 (FIAGQLMMFISIYYAPLHLAL), 91 to 111 (PHTITVLALPYLLFHFFWNNH), 133 to 153 (VFLNNLIFQLFNHFILPSSML), 176 to 196 (VGWLIGHILFMKWVGLVLVWI), and 227 to 247 (IFSILLFITCVYYLGRIPSPI).

It belongs to the TIC214 family. As to quaternary structure, part of the Tic complex.

The protein resides in the plastid. Its subcellular location is the chloroplast inner membrane. Its function is as follows. Involved in protein precursor import into chloroplasts. May be part of an intermediate translocation complex acting as a protein-conducting channel at the inner envelope. The chain is Protein TIC 214 from Olimarabidopsis pumila (Dwarf rocket).